A 249-amino-acid chain; its full sequence is 5'-nucleotidase SurE (249 aa).

A divalent metal cation contacts are provided by Asp-9, Asp-10, Ser-40, and Asn-92.

It belongs to the SurE nucleotidase family. A divalent metal cation serves as cofactor.

Its subcellular location is the cytoplasm. It catalyses the reaction a ribonucleoside 5'-phosphate + H2O = a ribonucleoside + phosphate. Functionally, nucleotidase that shows phosphatase activity on nucleoside 5'-monophosphates. The chain is 5'-nucleotidase SurE from Shewanella frigidimarina (strain NCIMB 400).